Here is a 471-residue protein sequence, read N- to C-terminus: ATP synthase subunit beta (471 aa).

153 to 160 (GGAGVGKT) is a binding site for ATP.

It belongs to the ATPase alpha/beta chains family. As to quaternary structure, F-type ATPases have 2 components, CF(1) - the catalytic core - and CF(0) - the membrane proton channel. CF(1) has five subunits: alpha(3), beta(3), gamma(1), delta(1), epsilon(1). CF(0) has four main subunits: a(1), b(1), b'(1) and c(9-12).

It is found in the cell inner membrane. The enzyme catalyses ATP + H2O + 4 H(+)(in) = ADP + phosphate + 5 H(+)(out). Functionally, produces ATP from ADP in the presence of a proton gradient across the membrane. The catalytic sites are hosted primarily by the beta subunits. This is ATP synthase subunit beta from Methylibium petroleiphilum (strain ATCC BAA-1232 / LMG 22953 / PM1).